The primary structure comprises 330 residues: Growth hormone-regulated TBC protein 6 (330 aa).

One can recognise a Rab-GAP TBC domain in the interval 78–256 (GIPHTFRKEL…RLWDCLIYEG (179 aa)).

The protein is Growth hormone-regulated TBC protein 6 (tbc-6) of Caenorhabditis elegans.